We begin with the raw amino-acid sequence, 210 residues long: Thymidylate kinase (210 aa).

Gly10–Ser17 contacts ATP.

It belongs to the thymidylate kinase family.

The enzyme catalyses dTMP + ATP = dTDP + ADP. Phosphorylation of dTMP to form dTDP in both de novo and salvage pathways of dTTP synthesis. The protein is Thymidylate kinase of Pseudomonas savastanoi pv. phaseolicola (strain 1448A / Race 6) (Pseudomonas syringae pv. phaseolicola (strain 1448A / Race 6)).